A 123-amino-acid chain; its full sequence is Small ribosomal subunit protein uS12 (123 aa).

A 3-methylthioaspartic acid modification is found at Asp-89. Residues 101-123 (SLDTAGVKDRKQSRSKYGAKRPK) are disordered. Positions 113 to 123 (SRSKYGAKRPK) are enriched in basic residues.

This sequence belongs to the universal ribosomal protein uS12 family. Part of the 30S ribosomal subunit. Contacts proteins S8 and S17. May interact with IF1 in the 30S initiation complex.

Its function is as follows. With S4 and S5 plays an important role in translational accuracy. Functionally, interacts with and stabilizes bases of the 16S rRNA that are involved in tRNA selection in the A site and with the mRNA backbone. Located at the interface of the 30S and 50S subunits, it traverses the body of the 30S subunit contacting proteins on the other side and probably holding the rRNA structure together. The combined cluster of proteins S8, S12 and S17 appears to hold together the shoulder and platform of the 30S subunit. This is Small ribosomal subunit protein uS12 from Laribacter hongkongensis (strain HLHK9).